A 476-amino-acid polypeptide reads, in one-letter code: Sulfate adenylyltransferase subunit 1 (476 aa).

One can recognise a tr-type G domain in the interval 24-239 (KSLLRFLTCG…LLETVDVDHE (216 aa)). Residues 33 to 40 (GSVDDGKS) form a G1 region. Residue 33 to 40 (GSVDDGKS) participates in GTP binding. A G2 region spans residues 91–95 (GITID). The G3 stretch occupies residues 112–115 (DTPG). Residues 112-116 (DTPGH) and 167-170 (NKMD) each bind GTP. The interval 167 to 170 (NKMD) is G4. Residues 205 to 207 (SAL) form a G5 region.

Belongs to the TRAFAC class translation factor GTPase superfamily. Classic translation factor GTPase family. CysN/NodQ subfamily. Heterodimer composed of CysD, the smaller subunit, and CysN.

It catalyses the reaction sulfate + ATP + H(+) = adenosine 5'-phosphosulfate + diphosphate. Its pathway is sulfur metabolism; hydrogen sulfide biosynthesis; sulfite from sulfate: step 1/3. In terms of biological role, with CysD forms the ATP sulfurylase (ATPS) that catalyzes the adenylation of sulfate producing adenosine 5'-phosphosulfate (APS) and diphosphate, the first enzymatic step in sulfur assimilation pathway. APS synthesis involves the formation of a high-energy phosphoric-sulfuric acid anhydride bond driven by GTP hydrolysis by CysN coupled to ATP hydrolysis by CysD. This chain is Sulfate adenylyltransferase subunit 1, found in Vibrio campbellii (strain ATCC BAA-1116).